Consider the following 238-residue polypeptide: Thrombin-like enzyme AhV_TL-I (238 aa).

A Peptidase S1 domain is found at 1 to 229 (IIGGDECNIN…HLDWIENIIA (229 aa)). 6 disulfides stabilise this stretch: C7/C141, C28/C44, C76/C236, C120/C190, C152/C169, and C180/C205. Catalysis depends on H43, which acts as the Charge relay system. N-linked (GlcNAc...) asparagine glycosylation occurs at N81. D88 functions as the Charge relay system in the catalytic mechanism. S184 acts as the Charge relay system in catalysis.

This sequence belongs to the peptidase S1 family. Snake venom subfamily. As to quaternary structure, monomer. Post-translationally, N-glycosylated at Asn-81 by a disaccharide composed of two N-acetylglucosamine (NAG). The presence of this N-glycan deforms the enzyme and Removing the carbohydrate moiety increases the esterase activity, but induces a complete loss of contractile response on mouse thoracic aorta. In terms of tissue distribution, expressed by the venom gland.

Its subcellular location is the secreted. Inhibited by PMSF, L-cysteine and partially by SBTI and leupeptin. Thrombin-like enzyme that shows fibrinogenolytic activity against both the Aalpha (FGA) and Bbeta (FGB) chains of bovine fibrinogen. This enzyme has poor esterolytic activity upon BAEE substrate. It induces mouse thoracic aortic ring contraction with EC(50)=147 nmol/L. It shows vasoconstrictor effects that are independent of the enzymatic activity, but related to the release of calcium ions form the calcium store, potentially through the activation of ryanodine receptors. This chain is Thrombin-like enzyme AhV_TL-I, found in Gloydius halys (Chinese water mocassin).